Here is a 220-residue protein sequence, read N- to C-terminus: uncharacterized protein (220 aa).

The disordered stretch occupies residues 1 to 50 (MTDDVRDVNTETTDATEVAEIDSAAGEAGDSATEAFDTDSATESTAQKGQ). Polar residues predominate over residues 39–48 (DSATESTAQK). A helical transmembrane segment spans residues 65-85 (VPVILILLMLISGGATGWLYL).

It to M.tuberculosis Rv1363c.

Its subcellular location is the membrane. This is an uncharacterized protein from Mycobacterium tuberculosis (strain CDC 1551 / Oshkosh).